A 222-amino-acid polypeptide reads, in one-letter code: Germin-like protein subfamily 1 member 5 (222 aa).

A signal peptide spans 1–24 (MKGLLHFLLAKIILLALASSFVYC). A disulfide bridge connects residues Cys34 and Cys50. N-linked (GlcNAc...) asparagine glycans are attached at residues Asn38 and Asn71. Positions 64–215 (SGLNVPGNTS…AFALDFNKVK (152 aa)) constitute a Cupin type-1 domain. Mn(2+) contacts are provided by His112, His114, and Glu119. An N-linked (GlcNAc...) asparagine glycan is attached at Asn139. His163 contributes to the Mn(2+) binding site.

It belongs to the germin family. Oligomer (believed to be a pentamer but probably hexamer).

The protein resides in the secreted. The protein localises to the extracellular space. Its subcellular location is the apoplast. Functionally, may play a role in plant defense. Probably has no oxalate oxidase activity even if the active site is conserved. The chain is Germin-like protein subfamily 1 member 5 from Arabidopsis thaliana (Mouse-ear cress).